The primary structure comprises 446 residues: 3-phosphoshikimate 1-carboxyvinyltransferase (446 aa).

The tract at residues 1 to 20 is disordered; that stretch reads MIMAKPLSSRRAAPLAGSAP. 3-phosphoshikimate-binding residues include K25, S26, and R30. K25 serves as a coordination point for phosphoenolpyruvate. Phosphoenolpyruvate-binding residues include G98 and R126. Positions 171, 173, 324, and 351 each coordinate 3-phosphoshikimate. Position 173 (Q173) interacts with phosphoenolpyruvate. The Proton acceptor role is filled by D324. The phosphoenolpyruvate site is built by R355 and R399.

The protein belongs to the EPSP synthase family. In terms of assembly, monomer.

It is found in the cytoplasm. It carries out the reaction 3-phosphoshikimate + phosphoenolpyruvate = 5-O-(1-carboxyvinyl)-3-phosphoshikimate + phosphate. It participates in metabolic intermediate biosynthesis; chorismate biosynthesis; chorismate from D-erythrose 4-phosphate and phosphoenolpyruvate: step 6/7. In terms of biological role, catalyzes the transfer of the enolpyruvyl moiety of phosphoenolpyruvate (PEP) to the 5-hydroxyl of shikimate-3-phosphate (S3P) to produce enolpyruvyl shikimate-3-phosphate and inorganic phosphate. This is 3-phosphoshikimate 1-carboxyvinyltransferase from Paramagnetospirillum magneticum (strain ATCC 700264 / AMB-1) (Magnetospirillum magneticum).